The primary structure comprises 104 residues: uncharacterized protein (104 aa).

Residues 42–104 adopt a coiled-coil conformation; the sequence is ARDSFDQDFE…AREERHKLGR (63 aa).

The protein belongs to the WXG100 family.

This is an uncharacterized protein from Bacillus subtilis (strain 168).